Consider the following 247-residue polypeptide: Carboxy-S-adenosyl-L-methionine synthase (247 aa).

S-adenosyl-L-methionine contacts are provided by residues Tyr-40, 65–67, 90–91, 122–123, Asn-137, and Arg-204; these read GAS, DN, and DI.

The protein belongs to the class I-like SAM-binding methyltransferase superfamily. Cx-SAM synthase family. Homodimer.

It carries out the reaction prephenate + S-adenosyl-L-methionine = carboxy-S-adenosyl-L-methionine + 3-phenylpyruvate + H2O. Catalyzes the conversion of S-adenosyl-L-methionine (SAM) to carboxy-S-adenosyl-L-methionine (Cx-SAM). The protein is Carboxy-S-adenosyl-L-methionine synthase of Ectopseudomonas mendocina (strain ymp) (Pseudomonas mendocina).